Consider the following 464-residue polypeptide: Phospho-2-dehydro-3-deoxyheptonate aldolase AroG (464 aa).

Cysteine 87 lines the Mn(2+) pocket. Phosphoenolpyruvate-binding positions include arginine 126, 285 to 286 (ER), lysine 308, and arginine 339. Residues histidine 371, glutamate 413, and aspartate 443 each coordinate Mn(2+).

Belongs to the class-II DAHP synthase family. As to quaternary structure, homodimer. Probably interacts with MSMEG_5536. Requires Mn(2+) as cofactor. It depends on Co(2+) as a cofactor. The cofactor is Cd(2+).

It carries out the reaction D-erythrose 4-phosphate + phosphoenolpyruvate + H2O = 7-phospho-2-dehydro-3-deoxy-D-arabino-heptonate + phosphate. The protein operates within metabolic intermediate biosynthesis; chorismate biosynthesis; chorismate from D-erythrose 4-phosphate and phosphoenolpyruvate: step 1/7. Its function is as follows. Catalyzes an aldol-like condensation reaction between phosphoenolpyruvate (PEP) and D-erythrose 4-phosphate (E4P) to generate 3-deoxy-D-arabino-heptulosonate 7-phosphate (DAH7P) and inorganic phosphate. The sequence is that of Phospho-2-dehydro-3-deoxyheptonate aldolase AroG (aroG) from Mycolicibacterium smegmatis (strain ATCC 700084 / mc(2)155) (Mycobacterium smegmatis).